A 593-amino-acid polypeptide reads, in one-letter code: Aspartate--tRNA ligase (593 aa).

Glu180 lines the L-aspartate pocket. The segment at 204–207 is aspartate; it reads QIFK. Residue Arg226 participates in L-aspartate binding. ATP-binding positions include 226-228 and Gln235; that span reads RDE. His453 lines the L-aspartate pocket. An ATP-binding site is contributed by Glu487. Arg494 contributes to the L-aspartate binding site. Residue 539–542 coordinates ATP; sequence GLDR.

Belongs to the class-II aminoacyl-tRNA synthetase family. Type 1 subfamily. In terms of assembly, homodimer.

The protein localises to the cytoplasm. The enzyme catalyses tRNA(Asp) + L-aspartate + ATP = L-aspartyl-tRNA(Asp) + AMP + diphosphate. Functionally, catalyzes the attachment of L-aspartate to tRNA(Asp) in a two-step reaction: L-aspartate is first activated by ATP to form Asp-AMP and then transferred to the acceptor end of tRNA(Asp). In Clostridium botulinum (strain Kyoto / Type A2), this protein is Aspartate--tRNA ligase.